We begin with the raw amino-acid sequence, 357 residues long: Cholinesterase 1 (357 aa).

Ser-112 acts as the Acyl-ester intermediate in catalysis. A disulfide bridge connects residues Cys-166 and Cys-179. Catalysis depends on charge relay system residues Glu-244 and His-357.

The protein belongs to the type-B carboxylesterase/lipase family.

It catalyses the reaction an acylcholine + H2O = a carboxylate + choline + H(+). This Branchiostoma lanceolatum (Common lancelet) protein is Cholinesterase 1 (CHE1).